A 116-amino-acid chain; its full sequence is Small ribosomal subunit protein uS11m (116 aa).

Belongs to the universal ribosomal protein uS11 family.

The protein localises to the mitochondrion. This chain is Small ribosomal subunit protein uS11m (RPS11), found in Chondrus crispus (Carrageen Irish moss).